Consider the following 1436-residue polypeptide: MVGGALICKYLPREEQLKLISDLIQNDSLEEVLELIETSPLDITTDSNIETPIFEKITEQVIAYASIDGEAREMFRSSRAEMNKALRTSAQLLCCLPSVWHKFQVWMSYRLNDIISENYKHLFNDNFGKKIVQPFFDSFAEEQNANIKHENLHLDILSLLHYLEVVYLFDECKNGISSKCLDFIIVPLLGCNSEEIADSCSKLMRWHIKYLSKCCNTDSNFDKLIWTFIKQLYAEGSQQAWKQKNSLSFLLRFLLAAELSPELITYIKTDAYWRHIQTELDNDVHEHRKLALSILKLTIQKLSSHGITLQTTFYKCNDLANIEMLGSWKKFTTLYEMIALDTSLNQIQAAKQDIIKIFDNEHLHHSWGLILLSTGLKSSMESVRKYMMTLMFSITNMSAFSSNLPLLTKTLLPAAMSAHYFDVKGVSCPHGEKLSLFVNNLLSQTTEGISDILFEILKLLVEKGTSFDPSRIYLSYGILVFFQNNKQKTINSDHLSLIRKLYDFAAEEEVLETTIQTIYLKFLLYIDPSVSASELLFTLVSHIKLKGGTYKYVEPLFEDYRDLAVSHFDDLQAKENLTTNIGKDTIFDLLASIIFDFKDIDITPDFLIEVAKSKQDIPVYTSKAVTFLTQLLSGEPSNGYTYENATALLSYPNFTISTWKSINVNNLFKSVMEKFSLDKFKFFAEIYQKTYECRFDTIELNFNDLLSLYEMVKKSANQCSRESFKVKDSAYSSYFELLNTFLKTYALNRDSSEGNDDELHILLRLVDENINKDNGNYLGNLAVCKLLYFIIDSYIHCSTSVSDDDIFIVKFIFEKFSFIWECINSERLVLKERDLHLMLIKGLFHPVILYFGSNQYIDTLTSKLEEHAQTIISLSYSRRSLLPLLGSQLRVFMKFYGKLLREDVNYWWLINIIVGVFKQPQMDVNLYKLKPVISSLFDHKLNNYYIKGDELYEKVYGPDEILARVSIIDSILYANDQLKIRLIEKVTEKTNALYAIKRTDGAEALQRLLQWQLLLLSLLTTNEKKLSETSMIRILKSIEDESSPLVRVYKEWFISSKVVDYYKTGNPKFAEDYLFSLLEDHSKPVFVVSAEKICFMVLKDLRNDEKKYGFTQLLDRFICTLVPNAASNKPLVRHFSNSLIISLWPTFKAYLSDHTLRNIIENLYSNAKKTQIFGQYRAGDANIWDLKGDRKLTNMFGGVLKKVTDHDCPYISESVFEKYLQEKDIVPIGTDERSLWLDKRDTNTESVNNANISCDTSPLQTKSGAWETVLDLDNKKSNDVVTRSELIVVSSLVDKPPNLGGICRLCDVLGVGLLTVQDIKVKNHPQFKNVAVTADRWMPMEEVALDEIASFMKEKKKEGYTLIGLEQTDKSVKLDNNFQFPKKSLILLGTEAFGIPGTLLSELDLCLEIQQFGVIRSMNIQTATAVIVHSYTVQHM.

S-adenosyl-L-methionine-binding positions include 1365–1367 (LEQ), glycine 1389, and 1409–1418 (IQQFGVIRSM).

Belongs to the class IV-like SAM-binding methyltransferase superfamily. RNA methyltransferase TrmH family.

The protein localises to the cytoplasm. The catalysed reaction is guanosine(18) in tRNA + S-adenosyl-L-methionine = 2'-O-methylguanosine(18) in tRNA + S-adenosyl-L-homocysteine + H(+). Its function is as follows. S-adenosyl-L-methionine-dependent 2'-O-ribose methyltransferase that catalyzes the formation of 2'-O-methylguanosine at position 18 (Gm18) in various tRNAs. This is tRNA (guanosine(18)-2'-O)-methyltransferase from Saccharomyces cerevisiae (strain ATCC 204508 / S288c) (Baker's yeast).